The sequence spans 345 residues: NADH-ubiquinone oxidoreductase chain 2 (345 aa).

A run of 9 helical transmembrane segments spans residues M1–M21, H25–S45, F60–L80, F113–W133, L148–G168, V191–F211, I239–G259, H274–L294, and S324–I344.

Belongs to the complex I subunit 2 family.

It is found in the mitochondrion inner membrane. The enzyme catalyses a ubiquinone + NADH + 5 H(+)(in) = a ubiquinol + NAD(+) + 4 H(+)(out). Functionally, core subunit of the mitochondrial membrane respiratory chain NADH dehydrogenase (Complex I) that is believed to belong to the minimal assembly required for catalysis. Complex I functions in the transfer of electrons from NADH to the respiratory chain. The immediate electron acceptor for the enzyme is believed to be ubiquinone. This Varanus baritji (Black-spotted ridge-tailed monitor) protein is NADH-ubiquinone oxidoreductase chain 2 (MT-ND2).